A 156-amino-acid chain; its full sequence is uncharacterized protein (156 aa).

3 helical membrane-spanning segments follow: residues 21–41, 54–74, and 80–100; these read GVLF…AISL, TICS…IDFA, and SVLV…WALF.

Its subcellular location is the membrane. This is an uncharacterized protein from Saccharomyces cerevisiae (strain ATCC 204508 / S288c) (Baker's yeast).